Reading from the N-terminus, the 189-residue chain is MLSMSNDRADTGGRILRAAASCVVDYGVDRVTLAEIARRAGVSRPTVYRRWPDTRSIMASMLTSHIAAVLREVPLDGDDREALVKQIVAVADRLRGDDLIMSVMHSELARVYITERLGTSQQVLIEGLAARLTVAQRSGSVRSGDARRLATMVLLIAQSTIQSADIVDSILDSAALATELTHALNGYLC.

The HTH tetR-type domain occupies 9–69 (ADTGGRILRA…SMLTSHIAAV (61 aa)). Positions 32–51 (TLAEIARRAGVSRPTVYRRW) form a DNA-binding region, H-T-H motif.

This is an uncharacterized protein from Mycobacterium bovis (strain ATCC BAA-935 / AF2122/97).